We begin with the raw amino-acid sequence, 288 residues long: ATP synthase gamma chain (288 aa).

This sequence belongs to the ATPase gamma chain family. F-type ATPases have 2 components, CF(1) - the catalytic core - and CF(0) - the membrane proton channel. CF(1) has five subunits: alpha(3), beta(3), gamma(1), delta(1), epsilon(1). CF(0) has three main subunits: a, b and c.

The protein localises to the cell inner membrane. Functionally, produces ATP from ADP in the presence of a proton gradient across the membrane. The gamma chain is believed to be important in regulating ATPase activity and the flow of protons through the CF(0) complex. The polypeptide is ATP synthase gamma chain (Vibrio vulnificus (strain CMCP6)).